The following is a 373-amino-acid chain: Putative zinc finger protein 012R (373 aa).

The C2H2-type zinc-finger motif lies at 2–29; sequence FECTHCDLHFESKSKLATHQKTKKCTAH.

Belongs to the IIV-6 302L family.

This chain is Putative zinc finger protein 012R, found in Invertebrate iridescent virus 3 (IIV-3).